A 185-amino-acid polypeptide reads, in one-letter code: Dehydrin ERD14 (185 aa).

4 stretches are compositionally biased toward basic and acidic residues: residues 1-13 (MAEE…EQEV), 25-45 (VTDR…KPEE), 52-78 (FEQK…HRSD), and 103-134 (KPTT…KPED). 2 disordered regions span residues 1–138 (MAEE…GSAV) and 166–185 (EKLP…KDKE). Alanine 2 bears the N-acetylalanine mark. Residue serine 59 is modified to Phosphoserine. A run of 2 repeats spans residues 112–132 (EEEK…HKKP) and 154–174 (PVEK…YHPK). The tract at residues 112 to 174 (EEEKKGFMEK…KEKLPGYHPK (63 aa)) is 2 X 21 AA repeats, Lys-rich.

It belongs to the plant dehydrin family. In terms of tissue distribution, in stems, cauline leaves, roots and flowers. Low levels found in maturing seeds. Absent in dry seeds.

In terms of biological role, intrinsically disordered protein acting as a chaperone. Prevents heat-induced aggregation and/or inactivation of various substrates. Binds to acidic phospholipid vesicles without affecting membrane fluidity. This Arabidopsis thaliana (Mouse-ear cress) protein is Dehydrin ERD14 (ERD14).